The sequence spans 429 residues: Prenyltransferase okaC (429 aa).

Residues arginine 101, lysine 189, tyrosine 191, lysine 257, tyrosine 259, tyrosine 342, tyrosine 406, and tyrosine 410 each coordinate dimethylallyl diphosphate.

The protein belongs to the tryptophan dimethylallyltransferase family.

The enzyme catalyses cyclo(L-Trp-L-Trp) + 2 dimethylallyl diphosphate = cyclo(N(8)-(alpha,alpha-dimethylallyl)-L-Trp-6a-(alpha,alpha-dimethylallyl)-L-Trp) + 2 diphosphate. It participates in alkaloid biosynthesis. Its function is as follows. Prenyltransferase; part of the gene cluster that mediates the biosynthesis of okaramine B, a prenylated indole alkaloid that possesses an unusual octacyclic ring system, including a four-membered azetidine ring and an eight-membered azocine ring, and that exhibits insecticidal activity against silkworm larvae. Within the pathway, okaC performs asymmetric reverse prenylation of cyclo(L-Trp-L-Trp) at N-1 and C-2' of the indole ring to produce the cyclic prenylated tryptophan dimer cyclo(N8-(alpha,alpha-dimethylallyl)-L-Trp-6a-(alpha,alpha-dime-thylallyl)-L-Trp). The biosynthesis begins with the NRPS okaA that condenses two tryptophan molecules into cyclo(L-Trp-L-Trp). Prenylation by the prenyltransferase okaC then leads to the formation of cyclo(N8-(alpha,alpha-dimethylallyl)-L-Trp-6a-(alpha,alpha-dime-thylallyl)-L-Trp). This is followed by indole 2,3-epoxidation by the FAD-dependent monooxygenase okaB to facilitate the formation of the hexahydropyrrolo[2,3-b]indole (HPI) moiety of okaramine C. The cytochrome P450 monooxygenase okaD then likely catalyzes formation of the eight-membered ring of okaramine A. The dioxygenase okaE further forms the unusual 2-dimethyl-3-methyl-azetidine ring to yield 12-deshydroxyl okaramine E, as well as the hydroxylation of 12-deshydroxyl okaramine E to produce okaramine E. The cytochrome P450 monoxygenase okaG converts 12-deshydroxyl okaramine E into 3-desmethyl okaramine B which is further methylated by the methyltransferase okaF into okaramine B. In a shunt pathway, okaG and okaF together are also able to convert okaramine E into okaramine D. Okaramine H is produced by nonenzymatic conversion from okaramine A. In Penicillium ochrochloron, this protein is Prenyltransferase okaC.